We begin with the raw amino-acid sequence, 303 residues long: MTHMSIFLSRDNKVIVQGITGSEATVHTARMLRAGTQIVGGVNARKAGTTVTHEDKGGRLIKLPVFGSVAEAMEKTGADVSIIFVPPTFAKDAIIEAIDAEIPLLVVITEGIPVQDTAYAWAYNLEAGHKTRIIGPNCPGIISPGQSLAGITPANITGPGPIGLVSKSGTLTYQMMFELRDLGFSTAIGIGGDPVIGTTHIDAIEAFERDPDTKLIVMIGEIGGDAEERAADFIKTNVSKPVVGYVAGFTAPEGKTMGHAGAIVSGSSGTAAAKQEALEAAGVKVGKTPSATAALAREILLSL.

CoA contacts are provided by residues 20–23 (TGSE), Lys-46, and 108–110 (ITE). Residue Tyr-173 participates in substrate binding. Residue His-259 is the Tele-phosphohistidine intermediate of the active site.

The protein belongs to the succinate/malate CoA ligase alpha subunit family. Heterotetramer of two alpha and two beta subunits.

The catalysed reaction is succinate + ATP + CoA = succinyl-CoA + ADP + phosphate. The enzyme catalyses GTP + succinate + CoA = succinyl-CoA + GDP + phosphate. It participates in carbohydrate metabolism; tricarboxylic acid cycle; succinate from succinyl-CoA (ligase route): step 1/1. Its function is as follows. Succinyl-CoA synthetase functions in the citric acid cycle (TCA), coupling the hydrolysis of succinyl-CoA to the synthesis of either ATP or GTP and thus represents the only step of substrate-level phosphorylation in the TCA. The alpha subunit of the enzyme binds the substrates coenzyme A and phosphate, while succinate binding and nucleotide specificity is provided by the beta subunit. This Mycobacterium tuberculosis (strain CDC 1551 / Oshkosh) protein is Succinate--CoA ligase [ADP-forming] subunit alpha.